The chain runs to 443 residues: Eukaryotic translation initiation factor 3 subunit M (443 aa).

The PCI domain occupies 205 to 375 (GLYQSTGNLA…SLIRIHSISS (171 aa)). Residues 413 to 443 (ETVAQQGLGQQRRGGKRREEKKEKEDKEEQE) form a disordered region. Basic and acidic residues predominate over residues 429 to 443 (RREEKKEKEDKEEQE).

This sequence belongs to the eIF-3 subunit M family. Component of the eukaryotic translation initiation factor 3 (eIF-3) complex.

It localises to the cytoplasm. Component of the eukaryotic translation initiation factor 3 (eIF-3) complex, which is involved in protein synthesis of a specialized repertoire of mRNAs and, together with other initiation factors, stimulates binding of mRNA and methionyl-tRNAi to the 40S ribosome. The eIF-3 complex specifically targets and initiates translation of a subset of mRNAs involved in cell proliferation. The polypeptide is Eukaryotic translation initiation factor 3 subunit M (Cryptococcus neoformans var. neoformans serotype D (strain B-3501A) (Filobasidiella neoformans)).